Here is a 338-residue protein sequence, read N- to C-terminus: Ketol-acid reductoisomerase (NADP(+)) (338 aa).

One can recognise a KARI N-terminal Rossmann domain in the interval 1–181 (MHVYYDKDCD…GGGRTGIIET (181 aa)). Residues 24–27 (YGSQ), R47, S50, T52, and 82–85 (DEFQ) contribute to the NADP(+) site. Residue H107 is part of the active site. An NADP(+)-binding site is contributed by G133. The KARI C-terminal knotted domain occupies 182 to 327 (TFKDETETDL…AKLRAMMPWI (146 aa)). D190, E194, E226, and E230 together coordinate Mg(2+). S251 serves as a coordination point for substrate.

Belongs to the ketol-acid reductoisomerase family. The cofactor is Mg(2+).

The enzyme catalyses (2R)-2,3-dihydroxy-3-methylbutanoate + NADP(+) = (2S)-2-acetolactate + NADPH + H(+). It carries out the reaction (2R,3R)-2,3-dihydroxy-3-methylpentanoate + NADP(+) = (S)-2-ethyl-2-hydroxy-3-oxobutanoate + NADPH + H(+). It participates in amino-acid biosynthesis; L-isoleucine biosynthesis; L-isoleucine from 2-oxobutanoate: step 2/4. Its pathway is amino-acid biosynthesis; L-valine biosynthesis; L-valine from pyruvate: step 2/4. Its function is as follows. Involved in the biosynthesis of branched-chain amino acids (BCAA). Catalyzes an alkyl-migration followed by a ketol-acid reduction of (S)-2-acetolactate (S2AL) to yield (R)-2,3-dihydroxy-isovalerate. In the isomerase reaction, S2AL is rearranged via a Mg-dependent methyl migration to produce 3-hydroxy-3-methyl-2-ketobutyrate (HMKB). In the reductase reaction, this 2-ketoacid undergoes a metal-dependent reduction by NADPH to yield (R)-2,3-dihydroxy-isovalerate. The chain is Ketol-acid reductoisomerase (NADP(+)) from Cellvibrio japonicus (strain Ueda107) (Pseudomonas fluorescens subsp. cellulosa).